We begin with the raw amino-acid sequence, 193 residues long: dCTP deaminase (193 aa).

Residues 110–115 (RSSLAR), aspartate 128, 136–138 (VLE), tyrosine 171, lysine 178, and glutamine 182 contribute to the dCTP site. The active-site Proton donor/acceptor is glutamate 138.

Belongs to the dCTP deaminase family. Homotrimer.

It catalyses the reaction dCTP + H2O + H(+) = dUTP + NH4(+). Its pathway is pyrimidine metabolism; dUMP biosynthesis; dUMP from dCTP (dUTP route): step 1/2. Its function is as follows. Catalyzes the deamination of dCTP to dUTP. The sequence is that of dCTP deaminase from Aeromonas salmonicida (strain A449).